The chain runs to 423 residues: UPF0229 protein VV2350 (423 aa).

Residues 81–111 form a disordered region; that stretch reads QFITGDKIERPKGGQGGGGAGDGDASADGEG. A compositionally biased stretch (gly residues) spans 93 to 102; the sequence is GGQGGGGAGD.

It belongs to the UPF0229 family.

The sequence is that of UPF0229 protein VV2350 from Vibrio vulnificus (strain YJ016).